The following is a 309-amino-acid chain: Ribonuclease Z (309 aa).

7 residues coordinate Zn(2+): His63, His65, Asp67, His68, His145, Asp216, and His274. Asp67 functions as the Proton acceptor in the catalytic mechanism.

Belongs to the RNase Z family. In terms of assembly, homodimer. Zn(2+) serves as cofactor.

The enzyme catalyses Endonucleolytic cleavage of RNA, removing extra 3' nucleotides from tRNA precursor, generating 3' termini of tRNAs. A 3'-hydroxy group is left at the tRNA terminus and a 5'-phosphoryl group is left at the trailer molecule.. Its function is as follows. Zinc phosphodiesterase, which displays some tRNA 3'-processing endonuclease activity. Probably involved in tRNA maturation, by removing a 3'-trailer from precursor tRNA. The chain is Ribonuclease Z from Streptococcus agalactiae serotype Ia (strain ATCC 27591 / A909 / CDC SS700).